The sequence spans 114 residues: UPF0757 protein YmgG (114 aa).

This sequence belongs to the UPF0757 family.

This is UPF0757 protein YmgG from Edwardsiella ictaluri (strain 93-146).